Here is a 75-residue protein sequence, read N- to C-terminus: Cruzioseptin-6 (75 aa).

The signal sequence occupies residues 1-22; it reads MAYLKKSLFLVLFLGLVSLSIC. Residues 23 to 43 constitute a propeptide that is removed on maturation; the sequence is EEEKREEENEEEQEDDDQSEE. A disordered region spans residues 24–44; sequence EEKREEENEEEQEDDDQSEEK. The segment covering 30–41 has biased composition (acidic residues); sequence ENEEEQEDDDQS.

In terms of tissue distribution, expressed by the skin glands.

It localises to the secreted. Its function is as follows. Has antimicrobial activity. In Cruziohyla calcarifer (Splendid leaf frog), this protein is Cruzioseptin-6.